A 102-amino-acid polypeptide reads, in one-letter code: Large ribosomal subunit protein uL24 (102 aa).

Belongs to the universal ribosomal protein uL24 family. As to quaternary structure, part of the 50S ribosomal subunit.

One of two assembly initiator proteins, it binds directly to the 5'-end of the 23S rRNA, where it nucleates assembly of the 50S subunit. Functionally, one of the proteins that surrounds the polypeptide exit tunnel on the outside of the subunit. This Paraburkholderia xenovorans (strain LB400) protein is Large ribosomal subunit protein uL24.